The primary structure comprises 78 residues: Acyl carrier protein (78 aa).

Positions 2–77 (DDLFKKIQQL…DAYEFIKSQQ (76 aa)) constitute a Carrier domain. At S37 the chain carries O-(pantetheine 4'-phosphoryl)serine.

Belongs to the acyl carrier protein (ACP) family. 4'-phosphopantetheine is transferred from CoA to a specific serine of apo-ACP by AcpS. This modification is essential for activity because fatty acids are bound in thioester linkage to the sulfhydryl of the prosthetic group.

It is found in the cytoplasm. It functions in the pathway lipid metabolism; fatty acid biosynthesis. In terms of biological role, carrier of the growing fatty acid chain in fatty acid biosynthesis. The protein is Acyl carrier protein of Treponema denticola (strain ATCC 35405 / DSM 14222 / CIP 103919 / JCM 8153 / KCTC 15104).